Here is a 362-residue protein sequence, read N- to C-terminus: Mortality factor 4-like protein 1 (362 aa).

In terms of domain architecture, Tudor-knot spans 12–51; it reads QEGERVLCFHGPLLYEAKCVKVAIKDKQVKYFIHYSGWNK. The tract at residues 26–62 is interaction with KAT8; the sequence is YEAKCVKVAIKDKQVKYFIHYSGWNKKSAVRPRRSEK. Residues 113-182 are disordered; the sequence is RELQKANQEQ…RKKRARVDPT (70 aa). The interval 133-266 is sufficient for interaction with SIN3A; it reads PGKKTSGLQQ…VAGIKEYFNV (134 aa). The Nuclear localization signal motif lies at 135-146; it reads KKTSGLQQKNVE. Position 143 is an N6-acetyllysine (Lys143). Residues 164–230 are interaction with RB1-1; the sequence is STSETPQPPR…FYLPAKKNVD (67 aa). The sufficient for interaction with PHF12 stretch occupies residues 188-342; that stretch reads TFMNRVEVKV…FLKYLAKNSA (155 aa). One can recognise an MRG domain in the interval 191-362; the sequence is NRVEVKVKIP…APPEYHRKAV (172 aa). The interval 323 to 344 is interaction with RB1-2; it reads LALLLNYLHDFLKYLAKNSATL.

Component of the NuA4 histone acetyltransferase complex which contains the catalytic subunit KAT5/TIP60 and the subunits EP400, TRRAP/PAF400, BRD8/SMAP, EPC1, DMAP1/DNMAP1, RUVBL1/TIP49, RUVBL2, ING3, actin, ACTL6A/BAF53A, MORF4L1/MRG15, MORF4L2/MRGX, MRGBP, YEATS4/GAS41, VPS72/YL1 and MEAF6. The NuA4 complex interacts with MYC and the adenovirus E1A protein. MORF4L1 may also participate in the formation of NuA4 related complexes which lack the KAT5/TIP60 catalytic subunit, but which include the SWI/SNF related protein SRCAP. Component of the mSin3A histone deacetylase complex, which includes SIN3A, HDAC2, ARID4B, MORF4L1, RBBP4/RbAp48, and RBBP7/RbAp46. May also interact with PHF12 and one or more as yet undefined members of the TLE (transducin-like enhancer of split) family of transcriptional repressors. Component of the SIN3B complex, which includes SIN3B, HDAC2 or HDAC1, PHF12 and MORF4L1. Interacts with RB1 and KAT8. Interacts with the N-terminus of MRFAP1. Found in a complex composed of MORF4L1, MRFAP1 and RB1. Interacts with the entire BRCA complex, which contains BRCA1, PALB2, BRCA2 and RAD51. Interacts with PALB2. Forms a complex with MSL1 and NUPR1.

It is found in the nucleus. In terms of biological role, component of the NuA4 histone acetyltransferase (HAT) complex which is involved in transcriptional activation of select genes principally by acetylation of nucleosomal histones H4 and H2A. This modification may both alter nucleosome - DNA interactions and promote interaction of the modified histones with other proteins which positively regulate transcription. This complex may be required for the activation of transcriptional programs associated with oncogene and proto-oncogene mediated growth induction, tumor suppressor mediated growth arrest and replicative senescence, apoptosis, and DNA repair. The NuA4 complex ATPase and helicase activities seem to be, at least in part, contributed by the association of RUVBL1 and RUVBL2 with EP400. NuA4 may also play a direct role in DNA repair when directly recruited to sites of DNA damage. As part of the SIN3B complex represses transcription and counteracts the histone acetyltransferase activity of EP300 through the recognition H3K27ac marks by PHF12 and the activity of the histone deacetylase HDAC2. SIN3B complex is recruited downstream of the constitutively active genes transcriptional start sites through interaction with histones and mitigates histone acetylation and RNA polymerase II progression within transcribed regions contributing to the regulation of transcription. Required for homologous recombination repair (HRR) and resistance to mitomycin C (MMC). Involved in the localization of PALB2, BRCA2 and RAD51, but not BRCA1, to DNA-damage foci. The polypeptide is Mortality factor 4-like protein 1 (Homo sapiens (Human)).